The chain runs to 300 residues: Energy-coupling factor transporter ATP-binding protein EcfA2 (300 aa).

One can recognise an ABC transporter domain in the interval 3–258 (IKAKNIVKIY…NKFLIENKML (256 aa)). Residue 40-47 (GQTGSGKT) participates in ATP binding.

Belongs to the ABC transporter superfamily. Energy-coupling factor EcfA family. Forms a stable energy-coupling factor (ECF) transporter complex composed of 2 membrane-embedded substrate-binding proteins (S component), 2 ATP-binding proteins (A component) and 2 transmembrane proteins (T component).

Its subcellular location is the cell membrane. Its function is as follows. ATP-binding (A) component of a common energy-coupling factor (ECF) ABC-transporter complex. Unlike classic ABC transporters this ECF transporter provides the energy necessary to transport a number of different substrates. This chain is Energy-coupling factor transporter ATP-binding protein EcfA2, found in Mesomycoplasma hyopneumoniae (strain 232) (Mycoplasma hyopneumoniae).